Here is a 66-residue protein sequence, read N- to C-terminus: Large ribosomal subunit protein uL29 (66 aa).

Belongs to the universal ribosomal protein uL29 family.

The polypeptide is Large ribosomal subunit protein uL29 (Thermotoga neapolitana (strain ATCC 49049 / DSM 4359 / NBRC 107923 / NS-E)).